Here is a 281-residue protein sequence, read N- to C-terminus: Protein phosphatase 2C homolog 1 (281 aa).

A PPM-type phosphatase domain is found at 20–281; the sequence is RVGVAENKNS…DNVTVMVVFL (262 aa). Mn(2+)-binding residues include aspartate 58, glycine 59, aspartate 233, and aspartate 272.

Belongs to the PP2C family. As to quaternary structure, interacts with NBP2 and PBS2. Mg(2+) serves as cofactor. Mn(2+) is required as a cofactor.

The protein resides in the peroxisome. The enzyme catalyses O-phospho-L-seryl-[protein] + H2O = L-seryl-[protein] + phosphate. It catalyses the reaction O-phospho-L-threonyl-[protein] + H2O = L-threonyl-[protein] + phosphate. In terms of biological role, serine and threonine phosphatase. Involved in tRNA splicing and cell separation. This Saccharomyces cerevisiae (strain ATCC 204508 / S288c) (Baker's yeast) protein is Protein phosphatase 2C homolog 1 (PTC1).